Reading from the N-terminus, the 359-residue chain is 3-dehydroquinate synthase (359 aa).

Residues 70 to 75, 105 to 109, 129 to 130, Lys142, Lys151, and 169 to 172 each bind NAD(+); these read DGEQYK, GVIGD, TT, and FYKT. Residues Glu184, His247, and His264 each coordinate Zn(2+).

It belongs to the sugar phosphate cyclases superfamily. Dehydroquinate synthase family. Co(2+) is required as a cofactor. It depends on Zn(2+) as a cofactor. The cofactor is NAD(+).

It is found in the cytoplasm. The catalysed reaction is 7-phospho-2-dehydro-3-deoxy-D-arabino-heptonate = 3-dehydroquinate + phosphate. It participates in metabolic intermediate biosynthesis; chorismate biosynthesis; chorismate from D-erythrose 4-phosphate and phosphoenolpyruvate: step 2/7. Functionally, catalyzes the conversion of 3-deoxy-D-arabino-heptulosonate 7-phosphate (DAHP) to dehydroquinate (DHQ). The sequence is that of 3-dehydroquinate synthase from Francisella tularensis subsp. mediasiatica (strain FSC147).